Consider the following 761-residue polypeptide: Elongation factor G, mitochondrial (761 aa).

Residues 1–42 constitute a mitochondrion transit peptide; sequence MSVQKMMRVPRKMVGGRIPFFTCSKVFSGFSRRSFHESPLAR. Residues 68–349 form the tr-type G domain; the sequence is NKLRNIGISA…AIVDYLPNPS (282 aa). GTP-binding positions include 77-84, 148-152, and 202-205; these read AHIDSGKT, DTPGH, and NKMD.

Belongs to the TRAFAC class translation factor GTPase superfamily. Classic translation factor GTPase family. EF-G/EF-2 subfamily. Post-translationally, the precursor is processed in two steps involving mitochondrial intermediate peptidase (MIP) and mitochondrial processing peptidase (MPP).

It is found in the mitochondrion. Its pathway is protein biosynthesis; polypeptide chain elongation. Its function is as follows. Mitochondrial GTPase that catalyzes the GTP-dependent ribosomal translocation step during translation elongation. During this step, the ribosome changes from the pre-translocational (PRE) to the post-translocational (POST) state as the newly formed A-site-bound peptidyl-tRNA and P-site-bound deacylated tRNA move to the P and E sites, respectively. Catalyzes the coordinated movement of the two tRNA molecules, the mRNA and conformational changes in the ribosome. This is Elongation factor G, mitochondrial from Saccharomyces cerevisiae (strain YJM789) (Baker's yeast).